A 663-amino-acid polypeptide reads, in one-letter code: Methionine--tRNA ligase (663 aa).

The short motif at 10–20 (AYTNGPLHLGH) is the 'HIGH' region element. The Zn(2+) site is built by C142, C145, C154, and C157. The 'KMSKS' region signature appears at 323-327 (KMSTS). Position 326 (T326) interacts with ATP. Residues 563-663 (YFTKVDLRVG…REISLGSKIH (101 aa)) form the tRNA-binding domain.

This sequence belongs to the class-I aminoacyl-tRNA synthetase family. MetG type 1 subfamily. As to quaternary structure, homodimer. The cofactor is Zn(2+).

The protein localises to the cytoplasm. It carries out the reaction tRNA(Met) + L-methionine + ATP = L-methionyl-tRNA(Met) + AMP + diphosphate. Functionally, is required not only for elongation of protein synthesis but also for the initiation of all mRNA translation through initiator tRNA(fMet) aminoacylation. This is Methionine--tRNA ligase from Methanococcus vannielii (strain ATCC 35089 / DSM 1224 / JCM 13029 / OCM 148 / SB).